A 1341-amino-acid chain; its full sequence is Subtilisin-like protease 2 (1341 aa).

Positions 1-18 (MLNIIYVVSLILIKFIFY) are cleaved as a signal peptide. Positions 19–686 (KECNNNNNYY…KLYNNKYSFL (668 aa)) are cleaved as a propeptide — inhibition peptide. Disordered regions lie at residues 85–107 (EKKT…EKKK) and 143–171 (ADVS…NYKN). N-linked (GlcNAc...) asparagine glycans are attached at residues Asn-165, Asn-343, Asn-449, Asn-453, and Asn-492. Residues 415–474 (KKSKKEKENTQQKGGNNPNVDINILNNNNNNNNNNNSNNNSNSMNDEEINYNNNNNNKES) form a disordered region. Residues 430 to 474 (NNPNVDINILNNNNNNNNNNNSNNNSNSMNDEEINYNNNNNNKES) are compositionally biased toward low complexity. The segment at 499-530 (IYHNKNDNSYKNKKEGTGKNNDNNDPNNNNNK) is disordered. The segment covering 502–515 (NKNDNSYKNKKEGT) has biased composition (basic and acidic residues). Low complexity predominate over residues 517–530 (KNNDNNDPNNNNNK). N-linked (GlcNAc...) asparagine glycans are attached at residues Asn-550, Asn-641, and Asn-728. The Extracellular portion of the chain corresponds to 687-1136 (NKFLNIEPLI…LYNLYEYDSH (450 aa)). The Peptidase S8 domain maps to 726–1019 (TWNLSIIRVF…DSLVNAEGAV (294 aa)). Catalysis depends on charge relay system residues Asp-754 and His-797. Asn-820, Asn-856, Asn-892, and Asn-950 each carry an N-linked (GlcNAc...) asparagine glycan. Ser-960 serves as the catalytic Charge relay system. Asn-1009 and Asn-1105 each carry an N-linked (GlcNAc...) asparagine glycan. A helical membrane pass occupies residues 1137–1157 (YLLASVILFFLALLSIFVGMI). Topologically, residues 1158–1341 (YMKSRKHSDK…MNQLDDMFMK (184 aa)) are cytoplasmic.

The protein belongs to the peptidase S8 family. In terms of processing, proteolytically cleaved at the N-terminus to generate a 74kDa intermediate which is further processed into a 72kDa form. The first maturation cleavage is autocatalytic, occurs in the ER and is necessary for the subsequent SUB2 trafficking to the microneme. The second cleavage may be mediated by PMX/plasmepsin X.

Its subcellular location is the cell membrane. It is found in the cytoplasmic vesicle. The protein localises to the secretory vesicle. The protein resides in the microneme membrane. It catalyses the reaction Hydrolysis of proteins with broad specificity for peptide bonds, and a preference for a large uncharged residue in P1. Hydrolyzes peptide amides.. Activation may be calcium-dependent. Inhibited by the non-covalent interaction with the cleaved propeptide. Its function is as follows. Serine protease which plays an essential role in the shedding of AMA1, MSP1 and MSP7 from the surface of the invading merozoite; this step is essential for productive invasion and the release of the adhesion between the erythrocyte and the merozoite. May cleave TRAMP/PTTRAMP, thereby shedding TRAMP from the merozoite surface during erythrocyte invasion. In Plasmodium falciparum (isolate 3D7), this protein is Subtilisin-like protease 2.